Consider the following 953-residue polypeptide: MVNNKRKEIENQENDNNDDNDGLLTYKKFKEDINYDSIRSKELQTIAKSLGLPIIGKKQEIYKRIEGYFLSKKVKSDLINSTTNQLQQQPQQPQQQRYVLLIKDVDQLEIYFWKAFRNMIIFKNIFSNFKSKQFGYHDLIGINENFLKSYSNSLEIIKDNIKGNINHQIIRSVNDILNIIKTLKKKDNETISFYNTLFSAFSSTTTQSIKSLIFQFDENIDLWIQRMILNENLVALDQFIKFFKINSDVLKKSIEMHINPSFFNVVTYNNLKIYNYLKSINAIPTSHIKQRFSNIDLSDSLSFDCKLKRLIKSYKLLVDPTNFKKIQEIHQQEEEEQKQQKLNSDKDYIEKLNQLILELSEIESIHFTNDQLNSTIKNLLNQTTTTTTTTTTTTTTTTPILITNNNNSGDIKDIIKKYYKSIYLFFKIIKEGNLYNRNLMKPIHYYLYFKKEKSLIQLYEIFCGKNYTHYLIFFKSILMDQNLEKNQILELVSNILDIENGVPFQNIGCIYNFNLRSFNSFCKVVFSINDTELIDHLIKTIKKLQLVYDSKTKFPSISEIISTNFQYINKNEIVDFFFENYRNETTLFDDQNQNWYNGHVNIIDHYEKLMESIEKRLRLNIVYYYDWFTNVNKINEKKYNINILLDQLKRAISKPLLYSFFNDSGYYYNKLLIIFGWSLENGNEFLINNILSNEQFKQPFRFSEIIDSVLPPNKMSNSVKLIFNNISKESIESKLYQVKVKFNFSYVHGYYYDDFIPLTSTISTTTTTTTTNSEEVGQFIIGETKSFDFTISPRILFVCLYYLDRVDDIFYLFDKIPEIFNSGYFSNFTQESYLYNICSSYYLGLFINYFIENLNDNTINHLYTCLCVASRKGFIQIFQDILSSNKNSQYLLKVRTKTNQSSLFQSNLLCDMVVNSINSSNFQLSNLLIDFIDFSPKNEKVLRSKIFKSSNNK.

Positions 1–10 are enriched in basic and acidic residues; it reads MVNNKRKEIE. Residues 1 to 23 are disordered; that stretch reads MVNNKRKEIENQENDNNDDNDGL. Positions 11 to 21 are enriched in acidic residues; it reads NQENDNNDDND. Positions 35–69 constitute an SAP domain; the sequence is YDSIRSKELQTIAKSLGLPIIGKKQEIYKRIEGYF.

The protein belongs to the UPF0746 family.

The polypeptide is UPF0746 protein DDB_G0281301 (Dictyostelium discoideum (Social amoeba)).